We begin with the raw amino-acid sequence, 353 residues long: Diacetylchitobiose uptake system permease protein NgcF (353 aa).

The segment at 1–24 is disordered; the sequence is MKDTIPTAETASRRPEPAARGGRP. The next 6 helical transmembrane spans lie at 36–56, 100–120, 141–161, 197–217, 254–274, and 303–323; these read FFLAFLGVPLAIFVIFVLIPF, LLAAFVPLVTLTLALGVAVAI, IISFFPYVVPAIIVGLIWAQM, VMFVIVWGLVGFYAVLFIAAI, AYIYLGIAALDAFVYVQAMVP, and TAMGVVLAAVTLVFAALVFLV. In terms of domain architecture, ABC transmembrane type-1 spans 95-320; that stretch reads LRNVALLAAF…AVTLVFAALV (226 aa). The interval 329–353 is disordered; it reads GGEGESKRKAPGSRARRAAAKGGAR. Over residues 337 to 353 the composition is skewed to basic residues; that stretch reads KAPGSRARRAAAKGGAR.

The protein belongs to the binding-protein-dependent transport system permease family. The complex is composed of two ATP-binding proteins (MsiK), two transmembrane proteins (NgcF and NgcG) and a solute-binding protein (NgcE).

It localises to the cell membrane. Functionally, part of the ABC transporter complex NgcEFG-MsiK involved in N,N'-diacetylchitobiose ((GlcNAc)2) uptake. Responsible for the translocation of the substrate across the membrane. In Streptomyces coelicolor (strain ATCC BAA-471 / A3(2) / M145), this protein is Diacetylchitobiose uptake system permease protein NgcF.